The chain runs to 385 residues: 5'-AMP-activated protein kinase catalytic subunit alpha-1 (385 aa).

The Protein kinase domain maps to 1-229; it reads DGRVKIGHYI…IKDIREHEWF (229 aa). Thr14 is modified (phosphothreonine). 15–22 is an ATP binding site; sequence LGVGTFGK. Asp100 (proton acceptor) is an active-site residue. At Thr133 the chain carries Phosphothreonine; by LKB1 and CaMKK2. Residues Thr219 and Thr276 each carry the phosphothreonine modification. An AIS region spans residues 252–297; it reads EALKQDPLAVAYHLIIDNRDFYLATSPPDSFLDDHHLTRVPFLVAE. Position 277 is a phosphoserine (Ser277). Position 281 is a phosphoserine; by ULK1 (Ser281). Phosphothreonine; by ULK1 is present on Thr289. Thr298 is subject to Phosphothreonine. 2 positions are modified to phosphoserine: Ser353 and Ser383.

It belongs to the protein kinase superfamily. CAMK Ser/Thr protein kinase family. SNF1 subfamily. As to quaternary structure, AMPK is a heterotrimer of an alpha catalytic subunit (PRKAA1 or PRKAA2), a beta (PRKAB1 or PRKAB2) and a gamma non-catalytic subunits (PRKAG1, PRKAG2 or PRKAG3). Interacts with FNIP1 and FNIP2. The cofactor is Mg(2+). In terms of processing, ubiquitinated. Post-translationally, phosphorylated at Thr-133 by STK11/LKB1 in complex with STE20-related adapter-alpha (STRADA) pseudo kinase and CAB39. Also phosphorylated at Thr-133 by CAMKK2; triggered by a rise in intracellular calcium ions, without detectable changes in the AMP/ATP ratio. CAMKK1 can also phosphorylate Thr-133, but at a much lower level. Dephosphorylated by protein phosphatase 2A and 2C (PP2A and PP2C). Phosphorylated by ULK1 and ULK2; leading to negatively regulate AMPK activity and suggesting the existence of a regulatory feedback loop between ULK1, ULK2 and AMPK. Dephosphorylated by PPM1A and PPM1B. Glycosylated; O-GlcNAcylated by OGT, promoting the AMP-activated protein kinase (AMPK) activity.

It is found in the cytoplasm. Its subcellular location is the nucleus. The catalysed reaction is L-seryl-[protein] + ATP = O-phospho-L-seryl-[protein] + ADP + H(+). It carries out the reaction L-threonyl-[protein] + ATP = O-phospho-L-threonyl-[protein] + ADP + H(+). It catalyses the reaction L-seryl-[acetyl-CoA carboxylase] + ATP = O-phospho-L-seryl-[acetyl-CoA carboxylase] + ADP + H(+). The enzyme catalyses L-seryl-[3-hydroxy-3-methylglutaryl-coenzyme A reductase] + ATP = O-phospho-L-seryl-[3-hydroxy-3-methylglutaryl-coenzyme A reductase] + ADP + H(+). The catalysed reaction is L-seryl-[tau protein] + ATP = O-phospho-L-seryl-[tau protein] + ADP + H(+). It carries out the reaction L-threonyl-[tau protein] + ATP = O-phospho-L-threonyl-[tau protein] + ADP + H(+). Its activity is regulated as follows. Activated by phosphorylation on Thr-133. Binding of AMP to non-catalytic gamma subunit (PRKAG1, PRKAG2 or PRKAG3) results in allosteric activation, inducing phosphorylation on Thr-133. AMP-binding to gamma subunit also sustains activity by preventing dephosphorylation of Thr-133. ADP also stimulates Thr-133 phosphorylation, without stimulating already phosphorylated AMPK. ATP promotes dephosphorylation of Thr-133, rendering the enzyme inactive. Under physiological conditions AMPK mainly exists in its inactive form in complex with ATP, which is much more abundant than AMP. Selectively inhibited by compound C (6-[4-(2-Piperidin-1-yl-ethoxy)-phenyl)]-3-pyridin-4-yl-pyyrazolo[1,5-a] pyrimidine. Activated by resveratrol, a natural polyphenol present in red wine, and S17834, a synthetic polyphenol. Its function is as follows. Catalytic subunit of AMP-activated protein kinase (AMPK), an energy sensor protein kinase that plays a key role in regulating cellular energy metabolism. In response to reduction of intracellular ATP levels, AMPK activates energy-producing pathways and inhibits energy-consuming processes: inhibits protein, carbohydrate and lipid biosynthesis, as well as cell growth and proliferation. AMPK acts via direct phosphorylation of metabolic enzymes, and by longer-term effects via phosphorylation of transcription regulators. Regulates lipid synthesis by phosphorylating and inactivating lipid metabolic enzymes such as ACACA, ACACB, GYS1, HMGCR and LIPE; regulates fatty acid and cholesterol synthesis by phosphorylating acetyl-CoA carboxylase (ACACA and ACACB) and hormone-sensitive lipase (LIPE) enzymes, respectively. Promotes lipolysis of lipid droplets by mediating phosphorylation of isoform 1 of CHKA (CHKalpha2). Regulates insulin-signaling and glycolysis by phosphorylating IRS1, PFKFB2 and PFKFB3. AMPK stimulates glucose uptake in muscle by increasing the translocation of the glucose transporter SLC2A4/GLUT4 to the plasma membrane, possibly by mediating phosphorylation of TBC1D4/AS160. Regulates transcription and chromatin structure by phosphorylating transcription regulators involved in energy metabolism such as CRTC2/TORC2, FOXO3, histone H2B, HDAC5, MEF2C, MLXIPL/ChREBP, EP300, HNF4A, p53/TP53, SREBF1, SREBF2 and PPARGC1A. Acts as a key regulator of glucose homeostasis in liver by phosphorylating CRTC2/TORC2, leading to CRTC2/TORC2 sequestration in the cytoplasm. In response to stress, phosphorylates 'Ser-36' of histone H2B (H2BS36ph), leading to promote transcription. Acts as a key regulator of cell growth and proliferation by phosphorylating FNIP1, TSC2, RPTOR, WDR24 and ATG1/ULK1: in response to nutrient limitation, negatively regulates the mTORC1 complex by phosphorylating RPTOR component of the mTORC1 complex and by phosphorylating and activating TSC2. Also phosphorylates and inhibits GATOR2 subunit WDR24 in response to nutrient limitation, leading to suppress glucose-mediated mTORC1 activation. In response to energetic stress, phosphorylates FNIP1, inactivating the non-canonical mTORC1 signaling, thereby promoting nuclear translocation of TFEB and TFE3, and inducing transcription of lysosomal or autophagy genes. In response to nutrient limitation, promotes autophagy by phosphorylating and activating ATG1/ULK1. In that process also activates WDR45/WIPI4. Phosphorylates CASP6, thereby preventing its autoprocessing and subsequent activation. In response to nutrient limitation, phosphorylates transcription factor FOXO3 promoting FOXO3 mitochondrial import. Also acts as a regulator of cellular polarity by remodeling the actin cytoskeleton; probably by indirectly activating myosin. AMPK also acts as a regulator of circadian rhythm by mediating phosphorylation of CRY1, leading to destabilize it. May regulate the Wnt signaling pathway by phosphorylating CTNNB1, leading to stabilize it. Also has tau-protein kinase activity: in response to amyloid beta A4 protein (APP) exposure, activated by CAMKK2, leading to phosphorylation of MAPT/TAU; however the relevance of such data remains unclear in vivo. Also phosphorylates CFTR, EEF2K, KLC1, NOS3 and SLC12A1. Regulates hepatic lipogenesis. Activated via SIRT3, represses sterol regulatory element-binding protein (SREBP) transcriptional activities and ATP-consuming lipogenesis to restore cellular energy balance. Upon stress, regulates mitochondrial fragmentation through phosphorylation of MTFR1L. In Sus scrofa (Pig), this protein is 5'-AMP-activated protein kinase catalytic subunit alpha-1 (PRKAA1).